We begin with the raw amino-acid sequence, 557 residues long: CDP-diacylglycerol--glycerol-3-phosphate 3-phosphatidyltransferase, mitochondrial (557 aa).

The N-terminal 25 residues, 1–25 (MAAAGGAALWRRLAAWLPRGPPGLA), are a transit peptide targeting the mitochondrion. An ATP-binding site is contributed by 121–128 (ASLYLGTG). The region spanning 212-238 (TIGLQHIKVYLFDDNVILSGANLSDLY) is the PLD phosphodiesterase 1 domain. Residues His-217, Lys-219, and Asp-224 contribute to the active site. Positions 322–346 (TFHSSQQGSSMLPQHDSEASEGLKP) are disordered. Polar residues predominate over residues 323–333 (FHSSQQGSSML). Positions 336 to 346 (HDSEASEGLKP) are enriched in basic and acidic residues. Positions 461-494 (AGWTFHAKGLWLYLAGSSLPCLTLIGSPNFGYRS) constitute a PLD phosphodiesterase 2 domain.

It belongs to the CDP-alcohol phosphatidyltransferase class-II family.

Its subcellular location is the mitochondrion. The catalysed reaction is a CDP-1,2-diacyl-sn-glycerol + sn-glycerol 3-phosphate = a 1,2-diacyl-sn-glycero-3-phospho-(1'-sn-glycero-3'-phosphate) + CMP + H(+). It functions in the pathway phospholipid metabolism; phosphatidylglycerol biosynthesis; phosphatidylglycerol from CDP-diacylglycerol: step 1/2. With respect to regulation, activated by calcium and magnesium and inhibited by other bivalent cations. In terms of biological role, functions in the biosynthesis of the anionic phospholipids phosphatidylglycerol and cardiolipin. This chain is CDP-diacylglycerol--glycerol-3-phosphate 3-phosphatidyltransferase, mitochondrial (PGS1), found in Gallus gallus (Chicken).